Here is a 342-residue protein sequence, read N- to C-terminus: Nucleoid-associated protein Spea_1765 (342 aa).

The protein belongs to the YejK family.

The protein localises to the cytoplasm. It localises to the nucleoid. The polypeptide is Nucleoid-associated protein Spea_1765 (Shewanella pealeana (strain ATCC 700345 / ANG-SQ1)).